A 505-amino-acid polypeptide reads, in one-letter code: ATP synthase subunit alpha (505 aa).

An ATP-binding site is contributed by Gly169 to Thr176.

Belongs to the ATPase alpha/beta chains family. In terms of assembly, F-type ATPases have 2 components, CF(1) - the catalytic core - and CF(0) - the membrane proton channel. CF(1) has five subunits: alpha(3), beta(3), gamma(1), delta(1), epsilon(1). CF(0) has three main subunits: a(1), b(2) and c(9-12). The alpha and beta chains form an alternating ring which encloses part of the gamma chain. CF(1) is attached to CF(0) by a central stalk formed by the gamma and epsilon chains, while a peripheral stalk is formed by the delta and b chains.

Its subcellular location is the cell membrane. The enzyme catalyses ATP + H2O + 4 H(+)(in) = ADP + phosphate + 5 H(+)(out). In terms of biological role, produces ATP from ADP in the presence of a proton gradient across the membrane. The alpha chain is a regulatory subunit. The chain is ATP synthase subunit alpha from Alkaliphilus metalliredigens (strain QYMF).